Here is an 88-residue protein sequence, read N- to C-terminus: Large ribosomal subunit protein bL27 (88 aa).

The interval 1–23 (MAHKKGTGSTRNGRDSNSKRLGV) is disordered.

Belongs to the bacterial ribosomal protein bL27 family.

The polypeptide is Large ribosomal subunit protein bL27 (Synechococcus sp. (strain CC9902)).